The chain runs to 142 residues: Large ribosomal subunit protein uL11 (142 aa).

The protein belongs to the universal ribosomal protein uL11 family. In terms of assembly, part of the ribosomal stalk of the 50S ribosomal subunit. Interacts with L10 and the large rRNA to form the base of the stalk. L10 forms an elongated spine to which L12 dimers bind in a sequential fashion forming a multimeric L10(L12)X complex. Post-translationally, one or more lysine residues are methylated.

Forms part of the ribosomal stalk which helps the ribosome interact with GTP-bound translation factors. This is Large ribosomal subunit protein uL11 from Klebsiella pneumoniae (strain 342).